The sequence spans 139 residues: Cystatin-1 (139 aa).

An N-terminal signal peptide occupies residues 1-22; the sequence is MHSRLPVPASLCLLLLLPSVLP. Residues 27–127 form the Cystatin domain; that stretch reads GGLSPRDVTD…CHFEVWSRPW (101 aa). Residues 71–75 carry the Secondary area of contact motif; the sequence is QVVSG. 2 disulfides stabilise this stretch: C89–C105 and C118–C138.

Belongs to the cystatin family. Expressed by the venom gland.

Its subcellular location is the secreted. Its function is as follows. Inhibits various C1 cysteine proteases including cathepsin L, papain and cathepsin B. This protein has no toxic activity and its function in the venom is unknown. It may play a role as housekeeping or regulatory protein. In Crotalus adamanteus (Eastern diamondback rattlesnake), this protein is Cystatin-1.